The sequence spans 230 residues: ATP synthase subunit a (230 aa).

6 helical membrane passes run 26–46, 83–103, 112–132, 143–163, 182–202, and 203–223; these read ANAV…SLIA, FFPL…VGLI, NVNT…VVGI, FMGP…IGHL, LVLM…MMLM, and GVLV…IYIQ.

This sequence belongs to the ATPase A chain family. As to quaternary structure, F-type ATPases have 2 components, CF(1) - the catalytic core - and CF(0) - the membrane proton channel. CF(1) has five subunits: alpha(3), beta(3), gamma(1), delta(1), epsilon(1). CF(0) has three main subunits: a(1), b(2) and c(9-12). The alpha and beta chains form an alternating ring which encloses part of the gamma chain. CF(1) is attached to CF(0) by a central stalk formed by the gamma and epsilon chains, while a peripheral stalk is formed by the delta and b chains.

Its subcellular location is the cell inner membrane. Key component of the proton channel; it plays a direct role in the translocation of protons across the membrane. The sequence is that of ATP synthase subunit a from Trichlorobacter lovleyi (strain ATCC BAA-1151 / DSM 17278 / SZ) (Geobacter lovleyi).